We begin with the raw amino-acid sequence, 91 residues long: UPF0250 protein PSEEN4821 (91 aa).

Belongs to the UPF0250 family.

This Pseudomonas entomophila (strain L48) protein is UPF0250 protein PSEEN4821.